We begin with the raw amino-acid sequence, 173 residues long: Nicotinamide-nucleotide adenylyltransferase (173 aa).

The protein belongs to the archaeal NMN adenylyltransferase family.

It is found in the cytoplasm. The catalysed reaction is beta-nicotinamide D-ribonucleotide + ATP + H(+) = diphosphate + NAD(+). It functions in the pathway cofactor biosynthesis; NAD(+) biosynthesis; NAD(+) from nicotinamide D-ribonucleotide: step 1/1. This is Nicotinamide-nucleotide adenylyltransferase (ffdC) from Methanolobus tindarius.